A 147-amino-acid chain; its full sequence is MQNNEIQPSFLIQKVYTKDVSFETINSPACFKEQWNPSSDFNIDINTTKINDENFELDLTITVTTKNNETNAYIAEVTQSGIFTITSMSEEQIDSVLNTYCANTLFPYAKRIIDSSIIKGGFLPLNLAPINFDAIYLQKKSSPKREH.

This sequence belongs to the SecB family. In terms of assembly, homotetramer, a dimer of dimers. One homotetramer interacts with 1 SecA dimer.

It is found in the cytoplasm. In terms of biological role, one of the proteins required for the normal export of preproteins out of the cell cytoplasm. It is a molecular chaperone that binds to a subset of precursor proteins, maintaining them in a translocation-competent state. It also specifically binds to its receptor SecA. The polypeptide is Protein-export protein SecB 2 (Francisella tularensis subsp. holarctica (strain FTNF002-00 / FTA)).